A 360-amino-acid chain; its full sequence is Venom serine protease Bi-VSP (360 aa).

A signal peptide spans 1-26 (MTGSKMLFACLALIAFLHPLVHVASA). A propeptide spanning residues 27 to 113 (QECTTPNNKA…CGFSNVSHTR (87 aa)) is cleaved from the precursor. Residues 28-79 (ECTTPNNKAGKCLGIRVCKPLLEMLQTQGHAAADFLRQSVCKYENNNPIVCC) enclose the Clip domain. Intrachain disulfides connect cysteine 29–cysteine 78, cysteine 39–cysteine 68, cysteine 45–cysteine 79, cysteine 104–cysteine 230, cysteine 147–cysteine 163, cysteine 278–cysteine 296, and cysteine 307–cysteine 335. Asparagine 108 carries an N-linked (GlcNAc...) asparagine glycan. A Peptidase S1 domain is found at 114-360 (VVGGKPAVLG…LDDFILPAMQ (247 aa)). Histidine 162 functions as the Charge relay system in the catalytic mechanism. 4 residues coordinate Ca(2+): aspartate 176, asparagine 178, arginine 181, and aspartate 184. The active-site Charge relay system is the aspartate 210. The active-site Charge relay system is the serine 311.

This sequence belongs to the peptidase S1 family. CLIP subfamily. Expressed by the venom gland.

It localises to the secreted. Multifunctional venom serine protease. In insects, it acts as an arthropod prophenoloxidase-activating factor, thereby triggering the phenoloxidase cascade. When injected into larvae, it induces a lethal melanization response in target insects by modulating the innate immune response. In mammals, it converts fibrinogen into fibrin, activates prothrombin, and also degrades fibrin. In mammal, it may act in a cooperative manner with the serine protease inhibitor Bi-KTI (AC G3LH89) to promote the spread of bee venom under anti-bleeding conditions. This is Venom serine protease Bi-VSP from Bombus ignitus (Bumblebee).